We begin with the raw amino-acid sequence, 221 residues long: Ribosomal RNA small subunit methyltransferase G (221 aa).

S-adenosyl-L-methionine is bound by residues Gly85, Leu90, 138–139 (AE), and Arg151.

This sequence belongs to the methyltransferase superfamily. RNA methyltransferase RsmG family.

It localises to the cytoplasm. The catalysed reaction is guanosine(527) in 16S rRNA + S-adenosyl-L-methionine = N(7)-methylguanosine(527) in 16S rRNA + S-adenosyl-L-homocysteine. Functionally, specifically methylates the N7 position of guanine in position 527 of 16S rRNA. In Caulobacter sp. (strain K31), this protein is Ribosomal RNA small subunit methyltransferase G.